A 328-amino-acid polypeptide reads, in one-letter code: Ferredoxin--NADP reductase 2 (328 aa).

The FAD site is built by threonine 16, glutamate 35, glutamine 43, tyrosine 48, isoleucine 88, phenylalanine 123, aspartate 284, and threonine 325.

It belongs to the ferredoxin--NADP reductase type 2 family. Homodimer. FAD serves as cofactor.

It carries out the reaction 2 reduced [2Fe-2S]-[ferredoxin] + NADP(+) + H(+) = 2 oxidized [2Fe-2S]-[ferredoxin] + NADPH. This chain is Ferredoxin--NADP reductase 2, found in Oceanobacillus iheyensis (strain DSM 14371 / CIP 107618 / JCM 11309 / KCTC 3954 / HTE831).